We begin with the raw amino-acid sequence, 201 residues long: ATP-dependent Clp protease proteolytic subunit (201 aa).

Catalysis depends on S101, which acts as the Nucleophile. H126 is a catalytic residue.

The protein belongs to the peptidase S14 family. As to quaternary structure, component of the chloroplastic Clp protease core complex.

It is found in the plastid. Its subcellular location is the chloroplast stroma. The catalysed reaction is Hydrolysis of proteins to small peptides in the presence of ATP and magnesium. alpha-casein is the usual test substrate. In the absence of ATP, only oligopeptides shorter than five residues are hydrolyzed (such as succinyl-Leu-Tyr-|-NHMec, and Leu-Tyr-Leu-|-Tyr-Trp, in which cleavage of the -Tyr-|-Leu- and -Tyr-|-Trp bonds also occurs).. In terms of biological role, cleaves peptides in various proteins in a process that requires ATP hydrolysis. Has a chymotrypsin-like activity. Plays a major role in the degradation of misfolded proteins. The polypeptide is ATP-dependent Clp protease proteolytic subunit (Chaetosphaeridium globosum (Charophycean green alga)).